The primary structure comprises 346 residues: GTPase Obg (346 aa).

The Obg domain occupies 1–158; sequence MKFLDQVKIY…RAIWLRLKLI (158 aa). The region spanning 159 to 327 is the OBG-type G domain; it reads ADVGLVGLPN…LLREAFALVR (169 aa). GTP contacts are provided by residues 165–172, 190–194, 212–215, 279–282, and 308–310; these read GLPNAGKS, FTTLA, DIPG, NKID, and SGF. Residues Ser172 and Thr192 each coordinate Mg(2+).

Belongs to the TRAFAC class OBG-HflX-like GTPase superfamily. OBG GTPase family. In terms of assembly, monomer. Mg(2+) is required as a cofactor.

It is found in the cytoplasm. Functionally, an essential GTPase which binds GTP, GDP and possibly (p)ppGpp with moderate affinity, with high nucleotide exchange rates and a fairly low GTP hydrolysis rate. Plays a role in control of the cell cycle, stress response, ribosome biogenesis and in those bacteria that undergo differentiation, in morphogenesis control. The chain is GTPase Obg from Phenylobacterium zucineum (strain HLK1).